A 48-amino-acid polypeptide reads, in one-letter code: Cuticle protein 10 (48 aa).

The polypeptide is Cuticle protein 10 (Limulus polyphemus (Atlantic horseshoe crab)).